Here is a 355-residue protein sequence, read N- to C-terminus: Probable cinnamyl alcohol dehydrogenase (355 aa).

Cys47 contacts Zn(2+). Ser49 provides a ligand contact to NADP(+). Zn(2+) is bound by residues His69, Glu70, Cys100, Cys103, Cys106, Cys114, and Cys162. NADP(+) contacts are provided by residues Thr166, 187–192, 210–215, Thr250, Gly274, and 297–299; these read GLGGVG, SSSDKK, and SFI.

Belongs to the zinc-containing alcohol dehydrogenase family. Homodimer. Requires Zn(2+) as cofactor.

The catalysed reaction is (E)-cinnamyl alcohol + NADP(+) = (E)-cinnamaldehyde + NADPH + H(+). It catalyses the reaction (E)-coniferol + NADP(+) = (E)-coniferaldehyde + NADPH + H(+). It carries out the reaction (E)-sinapyl alcohol + NADP(+) = (E)-sinapaldehyde + NADPH + H(+). The enzyme catalyses (E)-4-coumaroyl alcohol + NADP(+) = (E)-4-coumaraldehyde + NADPH + H(+). The catalysed reaction is (E)-caffeyl alcohol + NADP(+) = (E)-caffeyl aldehyde + NADPH + H(+). It participates in aromatic compound metabolism; phenylpropanoid biosynthesis. Functionally, involved in lignin biosynthesis. Catalyzes the final step specific for the production of lignin monomers. Catalyzes the NADPH-dependent reduction of coniferaldehyde, 5-hydroxyconiferaldehyde, sinapaldehyde, 4-coumaraldehyde and caffeyl aldehyde to their respective alcohols. The polypeptide is Probable cinnamyl alcohol dehydrogenase (CAD1) (Eucalyptus botryoides (Southern mahogany)).